The primary structure comprises 338 residues: Solute carrier family 35 member G5 (338 aa).

Residues 1–21 (MAGSHPYFNLPDSTHPSPPSA) form a disordered region. Helical transmembrane passes span 37–57 (TNGLLVALLGGGLPAGFVGPL), 67–87 (LPSLELLICRCLFHLPIALPL), 105–125 (CFCALLNVLSIGCAYSAVQVV), 160–180 (CGLLGSILGLIIIVGPGLWTL), 190–210 (ALGYVQAFLGGLALSLGLLVY), 221–241 (TVAFLSGLVGLLGSVPGLFVL), 250–270 (LLSWSCVGAVGILALVSFTCV), 281–301 (LVCAVLHSEVVVALILQYYVL), and 305–325 (VAPSDIMGAGIVLGSIAIITA). The EamA 1 domain maps to 49-174 (LPAGFVGPLS…SILGLIIIVG (126 aa)). The EamA 2 domain occupies 272-325 (YAVTKAHPALVCAVLHSEVVVALILQYYVLHETVAPSDIMGAGIVLGSIAIITA).

The protein belongs to the SLC35G solute transporter family.

The protein localises to the membrane. In Pan troglodytes (Chimpanzee), this protein is Solute carrier family 35 member G5 (SLC35G5).